The primary structure comprises 295 residues: Elongation factor Ts (295 aa).

The tract at residues 79 to 82 is involved in Mg(2+) ion dislocation from EF-Tu; it reads TDFV.

The protein belongs to the EF-Ts family.

Its subcellular location is the cytoplasm. Associates with the EF-Tu.GDP complex and induces the exchange of GDP to GTP. It remains bound to the aminoacyl-tRNA.EF-Tu.GTP complex up to the GTP hydrolysis stage on the ribosome. The polypeptide is Elongation factor Ts (Bacillus cereus (strain G9842)).